The sequence spans 74 residues: UPF0346 protein LCA_0996 (74 aa).

Belongs to the UPF0346 family.

This is UPF0346 protein LCA_0996 from Latilactobacillus sakei subsp. sakei (strain 23K) (Lactobacillus sakei subsp. sakei).